Reading from the N-terminus, the 687-residue chain is Solute carrier organic anion transporter family member 1B2 (687 aa).

At 1–28 the chain is on the cytoplasmic side; it reads MDHTQQSRKAAEAQPSRSKQTRFCDGFK. Residues 29–48 form a helical membrane-spanning segment; that stretch reads LFLAALSFSYICKALGGVVM. Residues 49-67 lie on the Extracellular side of the membrane; it reads KSSITQIERRFDIPSSISG. The chain crosses the membrane as a helical span at residues 68–88; sequence LIDGGFEIGNLLVIVFVSYFG. The Cytoplasmic segment spans residues 89–94; the sequence is SKLHRP. The chain crosses the membrane as a helical span at residues 95–119; that stretch reads KLIGIGCFIMGIGSILTALPHFFMG. At 120–165 the chain is on the extracellular side; it reads YYKYAKENDIGSLGNSTLTCFINQMTSPTGPSPEIVEKGCEKGLKS. An N-linked (GlcNAc...) asparagine glycan is attached at asparagine 134. Residues 166–194 form a helical membrane-spanning segment; that stretch reads HMWIYVLMGNMLRGIGETPIVPLGISYLD. Residues 195–213 are Cytoplasmic-facing; the sequence is DFAKEGHTSMHLGTLHTIA. Residues 214 to 234 traverse the membrane as a helical segment; that stretch reads MIGPILGFIMSSVFAKIYVDV. Residues 235-252 are Extracellular-facing; sequence GYVDLNSVRITPNDARWV. The helical transmembrane segment at 253–277 threads the bilayer; it reads GAWWLSFIVNGLLCITSSIPFFFLP. The Cytoplasmic segment spans residues 278-328; that stretch reads KIPKRSQEERKNSVSLHAPKTDEEKKHMTNLTKQEEQDPSNMTGFLRSLRS. The disordered stretch occupies residues 286–311; the sequence is ERKNSVSLHAPKTDEEKKHMTNLTKQ. Phosphoserine is present on residues serine 290 and serine 292. Residues 329-350 traverse the membrane as a helical segment; sequence ILTNEIYVIFLILTLLQVSGFI. Over 351–370 the chain is Extracellular; the sequence is GSFTYLFKFIEQQFGRTASQ. The chain crosses the membrane as a helical span at residues 371-394; sequence ANFLLGIITIPTMATAMFLGGYIV. Residues 395–398 lie on the Cytoplasmic side of the membrane; sequence KKFK. The chain crosses the membrane as a helical span at residues 399–422; the sequence is LTSVGIAKFVFFTSSVAYAFQFLY. The Extracellular portion of the chain corresponds to 423–531; that stretch reads FPLLCENKPF…YKCKTNYYFY (109 aa). One can recognise a Kazal-like domain in the interval 450–507; the sequence is DVPLSYCNSDCSCDKNQWEPICGENGVTYISPCLAGCKSFRGDKKPNNTEFYDCSCIS. Cystine bridges form between cysteine 456–cysteine 486, cysteine 462–cysteine 482, and cysteine 471–cysteine 505. Residues asparagine 496 and asparagine 511 are each glycosylated (N-linked (GlcNAc...) asparagine). Residues 532–554 form a helical membrane-spanning segment; that stretch reads IILQVTVSFFTAMGSPSLILILM. Topologically, residues 555–563 are cytoplasmic; it reads KSVQPELKS. Residues 564 to 589 traverse the membrane as a helical segment; it reads LAMGFHSLIIRALGGILAPIYYGAFI. At 590 to 623 the chain is on the extracellular side; the sequence is DRTCIKWSVTSCGKRGACRLYNSRLFGFSYLGLN. A helical transmembrane segment spans residues 624–641; it reads LALKTPPLFLYVVLIYFT. Residues 642 to 687 lie on the Cytoplasmic side of the membrane; the sequence is KRKYKRNDNKTLENGRQFTDEGNPDSVNKNGYYCVPYDEQSNETPL. Threonine 660 carries the post-translational modification Phosphothreonine. A Phosphoserine modification is found at serine 667.

This sequence belongs to the organo anion transporter (TC 2.A.60) family. Liver specific. Expression is highest in central perivenous hepatocytes and lowest in the periportal region. Isoform 1 predominates. Not detected in heart, brain, kidney, skeletal muscle, lung, testis or spleen.

The protein resides in the basolateral cell membrane. It catalyses the reaction estrone 3-sulfate(out) = estrone 3-sulfate(in). It carries out the reaction taurocholate(out) = taurocholate(in). The enzyme catalyses prostaglandin E2(out) = prostaglandin E2(in). The catalysed reaction is L-thyroxine(out) = L-thyroxine(in). Its function is as follows. Mediates the Na(+)-independent uptake of organic anions such as taurochlate, bromosulfophthalein and steroid conjugates (estrone 3-sulfate, 17-beta-glucuronosyl estradiol, dehydroepiandrosterone sulfate). Also transports prostaglandin E2 and L-thyroxine (T4). Shows a pH-sensitive substrate specificity which may be ascribed to the protonation state of the binding site and leads to a stimulation of substrate transport in an acidic microenvironment. Hydrogencarbonate/HCO3(-) acts as the probable counteranion that exchanges for organic anions. In Rattus norvegicus (Rat), this protein is Solute carrier organic anion transporter family member 1B2 (Slco1b2).